The chain runs to 526 residues: Probable feruloyl esterase B-2 (526 aa).

An N-terminal signal peptide occupies residues 1-19 (MPSLRRLLPFLAAGSAALA). Disulfide bonds link Cys-28–Cys-75 and Cys-63–Cys-114. Asn-53, Asn-85, Asn-98, and Asn-138 each carry an N-linked (GlcNAc...) asparagine glycan. Intrachain disulfides connect Cys-187-Cys-441, Cys-256-Cys-273, and Cys-282-Cys-291. The active-site Acyl-ester intermediate is Ser-188. A glycan (N-linked (GlcNAc...) asparagine) is linked at Asn-246. 5 residues coordinate Ca(2+): Asp-257, Asp-260, Ala-262, Asp-264, and Ile-266. N-linked (GlcNAc...) asparagine glycans are attached at residues Asn-287 and Asn-311. Residues Asp-400 and His-440 each act as charge relay system in the active site. Asn-490 and Asn-516 each carry an N-linked (GlcNAc...) asparagine glycan. Cys-503 and Cys-525 are oxidised to a cystine.

This sequence belongs to the tannase family.

Its subcellular location is the secreted. The enzyme catalyses feruloyl-polysaccharide + H2O = ferulate + polysaccharide.. In terms of biological role, involved in degradation of plant cell walls. Hydrolyzes the feruloyl-arabinose ester bond in arabinoxylans as well as the feruloyl-galactose and feruloyl-arabinose ester bonds in pectin. The polypeptide is Probable feruloyl esterase B-2 (faeB-2) (Aspergillus oryzae (strain ATCC 42149 / RIB 40) (Yellow koji mold)).